A 380-amino-acid chain; its full sequence is 3-isopropylmalate dehydratase large subunit 2 (380 aa).

The [4Fe-4S] cluster site is built by C262, C320, and C323.

Belongs to the aconitase/IPM isomerase family. LeuC type 2 subfamily. In terms of assembly, heterodimer of LeuC and LeuD. [4Fe-4S] cluster serves as cofactor.

The enzyme catalyses (2R,3S)-3-isopropylmalate = (2S)-2-isopropylmalate. Its pathway is amino-acid biosynthesis; L-leucine biosynthesis; L-leucine from 3-methyl-2-oxobutanoate: step 2/4. Its function is as follows. Catalyzes the isomerization between 2-isopropylmalate and 3-isopropylmalate, via the formation of 2-isopropylmaleate. This chain is 3-isopropylmalate dehydratase large subunit 2, found in Pyrococcus furiosus (strain ATCC 43587 / DSM 3638 / JCM 8422 / Vc1).